A 189-amino-acid polypeptide reads, in one-letter code: Protein GrpE (189 aa).

Polar residues predominate over residues 1–13; that stretch reads MSENKQPEQNQDL. A disordered region spans residues 1 to 35; sequence MSENKQPEQNQDLTGEPSPEELEAAQAADEFDAMN.

The protein belongs to the GrpE family. As to quaternary structure, homodimer.

The protein resides in the cytoplasm. In terms of biological role, participates actively in the response to hyperosmotic and heat shock by preventing the aggregation of stress-denatured proteins, in association with DnaK and GrpE. It is the nucleotide exchange factor for DnaK and may function as a thermosensor. Unfolded proteins bind initially to DnaJ; upon interaction with the DnaJ-bound protein, DnaK hydrolyzes its bound ATP, resulting in the formation of a stable complex. GrpE releases ADP from DnaK; ATP binding to DnaK triggers the release of the substrate protein, thus completing the reaction cycle. Several rounds of ATP-dependent interactions between DnaJ, DnaK and GrpE are required for fully efficient folding. This is Protein GrpE from Polaromonas naphthalenivorans (strain CJ2).